The primary structure comprises 455 residues: Argininosuccinate lyase (455 aa).

The protein belongs to the lyase 1 family. Argininosuccinate lyase subfamily.

It is found in the cytoplasm. It carries out the reaction 2-(N(omega)-L-arginino)succinate = fumarate + L-arginine. It participates in amino-acid biosynthesis; L-arginine biosynthesis; L-arginine from L-ornithine and carbamoyl phosphate: step 3/3. This Caulobacter sp. (strain K31) protein is Argininosuccinate lyase.